We begin with the raw amino-acid sequence, 115 residues long: U3-lycotoxin-Ls1a (115 aa).

The first 20 residues, 1–20 (MKFVLLFGVLLVTFFSYSSA), serve as a signal peptide directing secretion. Residues 21–44 (EMLDDFDQADEDELLSLIEKGEAR) constitute a propeptide that is removed on maturation. Cystine bridges form between C48–C63, C55–C72, C62–C87, and C74–C85.

The protein belongs to the neurotoxin 19 (CSTX) family. 01 subfamily. Expressed by the venom gland.

It localises to the secreted. This Lycosa singoriensis (Wolf spider) protein is U3-lycotoxin-Ls1a.